A 304-amino-acid chain; its full sequence is Pyridoxal 5'-phosphate synthase subunit PdxS (304 aa).

Aspartate 34 contributes to the D-ribose 5-phosphate binding site. Lysine 91 (schiff-base intermediate with D-ribose 5-phosphate) is an active-site residue. Glycine 163 serves as a coordination point for D-ribose 5-phosphate. Arginine 175 contributes to the D-glyceraldehyde 3-phosphate binding site. D-ribose 5-phosphate-binding positions include glycine 224 and 245-246 (GS).

It belongs to the PdxS/SNZ family. In the presence of PdxT, forms a dodecamer of heterodimers.

It carries out the reaction aldehydo-D-ribose 5-phosphate + D-glyceraldehyde 3-phosphate + L-glutamine = pyridoxal 5'-phosphate + L-glutamate + phosphate + 3 H2O + H(+). It functions in the pathway cofactor biosynthesis; pyridoxal 5'-phosphate biosynthesis. In terms of biological role, catalyzes the formation of pyridoxal 5'-phosphate from ribose 5-phosphate (RBP), glyceraldehyde 3-phosphate (G3P) and ammonia. The ammonia is provided by the PdxT subunit. Can also use ribulose 5-phosphate and dihydroxyacetone phosphate as substrates, resulting from enzyme-catalyzed isomerization of RBP and G3P, respectively. The protein is Pyridoxal 5'-phosphate synthase subunit PdxS of Cutibacterium acnes (strain DSM 16379 / KPA171202) (Propionibacterium acnes).